The following is a 335-amino-acid chain: UPF0065 protein BB4329 (335 aa).

The signal sequence occupies residues 1 to 39; it reads MNKNIPAFHRRCHGLVQGLARTLLLAPVLLALSVPAAQA.

The protein belongs to the UPF0065 (bug) family.

Its subcellular location is the periplasm. In Bordetella bronchiseptica (strain ATCC BAA-588 / NCTC 13252 / RB50) (Alcaligenes bronchisepticus), this protein is UPF0065 protein BB4329.